The following is a 194-amino-acid chain: uncharacterized protein (194 aa).

Disordered stretches follow at residues 1–72 and 113–194; these read MAAK…PAAE and VLIP…SLAV. Over residues 26–39 the composition is skewed to basic and acidic residues; it reads AEGRSSEGRKERTA. A compositionally biased stretch (polar residues) spans 146 to 171; it reads GSSSTSRNQVASLAYRTQNTAASQPR.

This is an uncharacterized protein from Homo sapiens (Human).